A 151-amino-acid chain; its full sequence is Late embryogenesis abundant protein Lea14-A (151 aa).

It belongs to the LEA type 2 family.

In Gossypium hirsutum (Upland cotton), this protein is Late embryogenesis abundant protein Lea14-A (LEA14-A).